A 178-amino-acid chain; its full sequence is Cytochrome b6-f complex iron-sulfur subunit (178 aa).

The chain crosses the membrane as a helical span at residues Leu20–Met42. In terms of domain architecture, Rieske spans Lys65–Val161. [2Fe-2S] cluster-binding residues include Cys107, His109, Cys125, and His128. A disulfide bridge connects residues Cys112 and Cys127.

The protein belongs to the Rieske iron-sulfur protein family. As to quaternary structure, the 4 large subunits of the cytochrome b6-f complex are cytochrome b6, subunit IV (17 kDa polypeptide, PetD), cytochrome f and the Rieske protein, while the 4 small subunits are PetG, PetL, PetM and PetN. The complex functions as a dimer. Requires [2Fe-2S] cluster as cofactor.

It localises to the cellular thylakoid membrane. The catalysed reaction is 2 oxidized [plastocyanin] + a plastoquinol + 2 H(+)(in) = 2 reduced [plastocyanin] + a plastoquinone + 4 H(+)(out). Component of the cytochrome b6-f complex, which mediates electron transfer between photosystem II (PSII) and photosystem I (PSI), cyclic electron flow around PSI, and state transitions. The chain is Cytochrome b6-f complex iron-sulfur subunit from Prochlorococcus marinus (strain MIT 9301).